The following is a 151-amino-acid chain: Putative pre-16S rRNA nuclease (151 aa).

Belongs to the YqgF nuclease family.

The protein resides in the cytoplasm. Its function is as follows. Could be a nuclease involved in processing of the 5'-end of pre-16S rRNA. This chain is Putative pre-16S rRNA nuclease, found in Nostoc sp. (strain PCC 7120 / SAG 25.82 / UTEX 2576).